The primary structure comprises 466 residues: Tryptophan synthase beta chain 2, chloroplastic (466 aa).

Position 161 is an N6-(pyridoxal phosphate)lysine (Lys161).

Belongs to the TrpB family. As to quaternary structure, tetramer of two alpha and two beta chains. Pyridoxal 5'-phosphate is required as a cofactor.

Its subcellular location is the plastid. It localises to the chloroplast. It carries out the reaction (1S,2R)-1-C-(indol-3-yl)glycerol 3-phosphate + L-serine = D-glyceraldehyde 3-phosphate + L-tryptophan + H2O. It functions in the pathway amino-acid biosynthesis; L-tryptophan biosynthesis; L-tryptophan from chorismate: step 5/5. Its function is as follows. The beta subunit is responsible for the synthesis of L-tryptophan from indole and L-serine. The sequence is that of Tryptophan synthase beta chain 2, chloroplastic (TSB) from Camptotheca acuminata (Happy tree).